A 55-amino-acid chain; its full sequence is Large ribosomal subunit protein bL33 (55 aa).

Belongs to the bacterial ribosomal protein bL33 family.

The protein is Large ribosomal subunit protein bL33 (rpmG) of Buchnera aphidicola subsp. Acyrthosiphon pisum (strain APS) (Acyrthosiphon pisum symbiotic bacterium).